The primary structure comprises 208 residues: MEKGLLIVISGPSGTGKGTVCKELLRNNNFWFSVSSTTRDPREGEIQGKSYYFMSKEEFEDKIKENDFLEYAKVYGNYYGTPKSKVIEMLDKGKDVILEIDIQGALQVKENYKEGIFIFILPPSMEELKNRIIKRGTETEESLMTRFKSAYKEINYVSKYNYAVVNDKVHDAVEKIQSIISAEKCRVDRIKDSILLSKEGIIHEQLYD.

The Guanylate kinase-like domain occupies 4–181 (GLLIVISGPS…AVEKIQSIIS (178 aa)). 11 to 18 (GPSGTGKG) lines the ATP pocket.

It belongs to the guanylate kinase family.

The protein localises to the cytoplasm. It carries out the reaction GMP + ATP = GDP + ADP. Its function is as follows. Essential for recycling GMP and indirectly, cGMP. In Clostridium tetani (strain Massachusetts / E88), this protein is Guanylate kinase.